A 103-amino-acid polypeptide reads, in one-letter code: Large ribosomal subunit protein bL21 (103 aa).

It belongs to the bacterial ribosomal protein bL21 family. As to quaternary structure, part of the 50S ribosomal subunit. Contacts protein L20.

In terms of biological role, this protein binds to 23S rRNA in the presence of protein L20. The chain is Large ribosomal subunit protein bL21 from Alcanivorax borkumensis (strain ATCC 700651 / DSM 11573 / NCIMB 13689 / SK2).